A 507-amino-acid polypeptide reads, in one-letter code: Solute carrier family 2, facilitated glucose transporter member 6 (507 aa).

Residues 1–28 are disordered; it reads MQEPLLGAEGPDYDTFPEKPPPSPGDRA. At 1–37 the chain is on the cytoplasmic side; the sequence is MQEPLLGAEGPDYDTFPEKPPPSPGDRARVGTLQNKR. A Dileucine internalization motif motif is present at residues 5–6; sequence LL. The residue at position 23 (S23) is a Phosphoserine. The chain crosses the membrane as a helical span at residues 38–58; that stretch reads VFLATFAAVLGNFSFGYALVY. The Extracellular portion of the chain corresponds to 59–81; the sequence is TSPVIPALERSLDPDLHLTKSQA. A helical transmembrane segment spans residues 82–102; that stretch reads SWFGSVFTLGAAAGGLSAMIL. Over 103–111 the chain is Cytoplasmic; sequence NDLLGRKLS. The chain crosses the membrane as a helical span at residues 112–132; it reads IMFSAVPSAAGYALMAGAHGL. The Extracellular portion of the chain corresponds to 133 to 140; it reads WMLLLGRT. A helical membrane pass occupies residues 141 to 161; that stretch reads LTGFAGGLTAACIPVYVSEIA. Topologically, residues 162–168 are cytoplasmic; sequence PPGVRGA. A helical transmembrane segment spans residues 169 to 189; that stretch reads LGATPQLMAVFGSLSLYALGL. Residue Q174 participates in a D-hexose binding. Residues 190–194 lie on the Extracellular side of the membrane; that stretch reads LLPWR. Residues 195–215 traverse the membrane as a helical segment; it reads WLAVAGEAPVLIMILLLSFMP. The Cytoplasmic segment spans residues 216-289; it reads NSPRFLLSRG…LLMRLLQQLT (74 aa). 286–287 serves as a coordination point for a D-hexose; sequence QQ. The helical transmembrane segment at 290-310 threads the bilayer; that stretch reads GITPILVYLQSIFDSTAVLLP. At 311-314 the chain is on the extracellular side; that stretch reads PKDD. A helical membrane pass occupies residues 315–335; it reads AAIVGAVRLLSVLIAALTMDL. Over 336–339 the chain is Cytoplasmic; sequence AGRK. A helical membrane pass occupies residues 340-360; the sequence is VLLFVSAAIMFAANLTLGLYI. Over 361-395 the chain is Extracellular; sequence HFGPRPLSPNSTAGLESESWGDLAQPLAAPAGYLT. N370 carries an N-linked (GlcNAc...) asparagine glycan. A helical membrane pass occupies residues 396-416; sequence LVPLLATMLFIMGYAVGWGPI. Over 417–435 the chain is Cytoplasmic; sequence TWLLMSEVLPLRARGVASG. W418 is a binding site for a D-hexose. Residues 436-456 form a helical membrane-spanning segment; sequence LCVLASWLTAFVLTKSFLPVV. Over 457 to 462 the chain is Extracellular; it reads STFGLQ. The chain crosses the membrane as a helical span at residues 463–483; it reads VPFFFFAAICLVSLVFTGCCV. The Cytoplasmic segment spans residues 484–507; the sequence is PETKGRSLEQIESFFRTGRRSFLR.

Belongs to the major facilitator superfamily. Sugar transporter (TC 2.A.1.1) family. Glucose transporter subfamily. In terms of tissue distribution, highly expressed in brain, spleen and peripheral blood leukocytes.

The protein resides in the lysosome membrane. Functionally, probable sugar transporter that acts as a regulator of glycolysis in macrophages. Does not transport glucose. The sequence is that of Solute carrier family 2, facilitated glucose transporter member 6 from Homo sapiens (Human).